The primary structure comprises 322 residues: Ornithine carbamoyltransferase (322 aa).

Residues serine 67 to threonine 70, glutamine 94, arginine 118, and histidine 145 to glutamine 148 contribute to the carbamoyl phosphate site. L-ornithine is bound by residues asparagine 176, aspartate 240, and serine 244–methionine 245. Carbamoyl phosphate contacts are provided by residues cysteine 280–leucine 281 and arginine 308.

It belongs to the aspartate/ornithine carbamoyltransferase superfamily. OTCase family.

The protein localises to the cytoplasm. The catalysed reaction is carbamoyl phosphate + L-ornithine = L-citrulline + phosphate + H(+). Its pathway is amino-acid biosynthesis; L-arginine biosynthesis; L-arginine from L-ornithine and carbamoyl phosphate: step 1/3. Functionally, reversibly catalyzes the transfer of the carbamoyl group from carbamoyl phosphate (CP) to the N(epsilon) atom of ornithine (ORN) to produce L-citrulline. This chain is Ornithine carbamoyltransferase, found in Oceanobacillus iheyensis (strain DSM 14371 / CIP 107618 / JCM 11309 / KCTC 3954 / HTE831).